Reading from the N-terminus, the 620-residue chain is Glutathione-regulated potassium-efflux system protein KefC (620 aa).

A run of 12 helical transmembrane segments spans residues 4-24 (HTLI…PIAV), 26-46 (LGLG…PWGL), 54-74 (SILH…GLEL), 90-110 (GALQ…FLGL), 114-134 (VAEL…MQAM), 149-169 (FAVL…IPLL), 178-198 (MGAF…VVLL), 218-238 (VFSA…EEVG), 270-290 (GLLL…GTLL), 294-314 (LRIV…LWLI), 327-347 (WFAV…GAAQ), and 359-379 (SLTL…VILN). The RCK N-terminal domain maps to 399 to 518 (QPRVIIAGFG…AGVEKPERET (120 aa)). The disordered stretch occupies residues 597-620 (GWQGTEEGKHTGNMADEPETKPSS).

The protein belongs to the monovalent cation:proton antiporter 2 (CPA2) transporter (TC 2.A.37) family. KefC subfamily. Homodimer. Interacts with the regulatory subunit KefF.

The protein localises to the cell inner membrane. Functionally, pore-forming subunit of a potassium efflux system that confers protection against electrophiles. Catalyzes K(+)/H(+) antiport. This chain is Glutathione-regulated potassium-efflux system protein KefC, found in Escherichia fergusonii (strain ATCC 35469 / DSM 13698 / CCUG 18766 / IAM 14443 / JCM 21226 / LMG 7866 / NBRC 102419 / NCTC 12128 / CDC 0568-73).